We begin with the raw amino-acid sequence, 322 residues long: Endochitinase (322 aa).

An N-terminal signal peptide occupies residues 1–21 (MKMRYCVLVSVLAILVIRGSA). Positions 22–62 (ENCGRQAGGALCPGGQCCSKWGWCGTTPDHCGTDCQSQCGG) constitute a Chitin-binding type-1 domain. Intrachain disulfides connect Cys24–Cys39, Cys33–Cys45, Cys38–Cys52, and Cys56–Cys60.

The protein belongs to the glycosyl hydrolase 19 family. Chitinase class I subfamily.

The catalysed reaction is Random endo-hydrolysis of N-acetyl-beta-D-glucosaminide (1-&gt;4)-beta-linkages in chitin and chitodextrins.. Its function is as follows. Defense against chitin-containing fungal pathogens. This is Endochitinase from Actinidia chinensis var. chinensis (Chinese soft-hair kiwi).